We begin with the raw amino-acid sequence, 953 residues long: Isoleucine--tRNA ligase (953 aa).

The 'HIGH' region signature appears at 58–68 (PYANGSIHIGH). E577 serves as a coordination point for L-isoleucyl-5'-AMP. The short motif at 618–622 (KMSKS) is the 'KMSKS' region element. K621 is an ATP binding site. Residues C916, C919, C936, and C939 each coordinate Zn(2+).

It belongs to the class-I aminoacyl-tRNA synthetase family. IleS type 1 subfamily. In terms of assembly, monomer. Zn(2+) serves as cofactor.

Its subcellular location is the cytoplasm. The enzyme catalyses tRNA(Ile) + L-isoleucine + ATP = L-isoleucyl-tRNA(Ile) + AMP + diphosphate. Functionally, catalyzes the attachment of isoleucine to tRNA(Ile). As IleRS can inadvertently accommodate and process structurally similar amino acids such as valine, to avoid such errors it has two additional distinct tRNA(Ile)-dependent editing activities. One activity is designated as 'pretransfer' editing and involves the hydrolysis of activated Val-AMP. The other activity is designated 'posttransfer' editing and involves deacylation of mischarged Val-tRNA(Ile). The polypeptide is Isoleucine--tRNA ligase (Aeromonas salmonicida (strain A449)).